The following is a 504-amino-acid chain: Probable cytosol aminopeptidase (504 aa).

2 residues coordinate Mn(2+): Lys276 and Asp281. Lys288 is a catalytic residue. Residues Asp299, Asp358, and Glu360 each contribute to the Mn(2+) site. Residue Arg362 is part of the active site.

The protein belongs to the peptidase M17 family. The cofactor is Mn(2+).

The protein localises to the cytoplasm. It carries out the reaction Release of an N-terminal amino acid, Xaa-|-Yaa-, in which Xaa is preferably Leu, but may be other amino acids including Pro although not Arg or Lys, and Yaa may be Pro. Amino acid amides and methyl esters are also readily hydrolyzed, but rates on arylamides are exceedingly low.. The enzyme catalyses Release of an N-terminal amino acid, preferentially leucine, but not glutamic or aspartic acids.. In terms of biological role, presumably involved in the processing and regular turnover of intracellular proteins. Catalyzes the removal of unsubstituted N-terminal amino acids from various peptides. This is Probable cytosol aminopeptidase from Bordetella avium (strain 197N).